The primary structure comprises 526 residues: Fusicoccadiene 8-ol C-16-hydroxylase (526 aa).

A helical membrane pass occupies residues 34 to 56 (AFVGFSVLGLTLLFSKLFYNAYL). Residues asparagine 309, asparagine 418, and asparagine 434 are each glycosylated (N-linked (GlcNAc...) asparagine). Cysteine 470 contributes to the heme binding site.

This sequence belongs to the cytochrome P450 family. The cofactor is heme.

Its subcellular location is the membrane. The protein operates within mycotoxin biosynthesis. Its function is as follows. Cytochrome P450 monooxygenase; part of the 2 gene clusters that mediate the biosynthesis of fusicoccins, diterpene glucosides that display phytohormone-like activity and function as potent activators of plasma membrane H(+)-ATPases in plants by modifying 14-3-3 proteins and cause the plant disease constriction canker. The first step in the pathway is performed by the fusicoccadiene synthase PaFS that possesses both prenyl transferase and terpene cyclase activity, converting isopentenyl diphosphate and dimethylallyl diphosphate into geranylgeranyl diphosphate (GGDP) and successively converting GGDP into fusicocca-2,10(14)-diene, a precursor for fusicoccin H. The second step is the oxidation at the C-8 position by the cytochrome P450 monooxygenase PaP450-2 to yield fusicocca-2,10(14)-diene-8-beta-ol. The cytochrome P450 monooxygenase PaP450-1 then catalyzes the hydroxylation at the C-16 position to produce fusicocca-2,10(14)-diene-8-beta,16-diol. The dioxygenase fc-dox then catalyzes the 16-oxydation of fusicocca-2,10(14)-diene-8-beta,16-diol to yield an aldehyde (8-beta-hydroxyfusicocca-1,10(14)-dien-16-al). The short-chain dehydrogenase/reductase fc-sdr catalyzes the reduction of the aldehyde to yield fusicocca-1,10(14)-diene-8-beta,16-diol. The next step is the hydroxylation at C-9 performed by the cytochrome P450 monooxygenase PaP450-3 that leads to fusicoccin H aglycon which is glycosylated to fusicoccin H by the O-glycosyltransferase PaGT. Hydroxylation at C-12 by the cytochrome P450 monooxygenase PaP450-4 leads then to the production of fusicoccin Q and is followed by methylation by the O-methyltransferase PaMT to yield fusicoccin P. Fusicoccin P is further converted to fusicoccin J via prenylation by the O-glucose prenyltransferase PaPT. Cytochrome P450 monooxygenase PaP450-5 then performs hydroxylation at C-19 to yield dideacetyl-fusicoccin A which is acetylated to 3'-O-deacetyl-fusicoccin A by the O-acetyltransferase PaAT-2. Finally, a another acetylation by the O-acetyltransferase PaAT-1 yields fusicoccin A. This is Fusicoccadiene 8-ol C-16-hydroxylase from Phomopsis amygdali (Fusicoccum amygdali).